Consider the following 1131-residue polypeptide: cGMP-specific 3',5'-cyclic phosphodiesterase (1131 aa).

Disordered regions lie at residues 1–26 (MTDVSSPAGGAASPVEMATSSSSAAT) and 42–150 (GVAP…SQQD). Positions 42-63 (GVAPGAVPGPGSAAIPASSSSG) are enriched in low complexity. Residues 75 to 86 (SNNNRPAATNRS) show a composition bias toward polar residues. Residues 110–136 (SSSTPSQSPSPSQSPSQASIQTQTSQQ) are compositionally biased toward low complexity. GAF domains lie at 255–412 (DIDV…GIGI) and 444–625 (NLEC…GLGI). The 324-residue stretch at 655–978 (SQDQTEKLTQ…RNWQDLAEKV (324 aa)) folds into the PDEase domain. Histidine 731 (proton donor) is an active-site residue. 4 residues coordinate a divalent metal cation: histidine 735, histidine 771, aspartate 772, and aspartate 882. Disordered stretches follow at residues 1019–1048 (QQSQHGSEDSHTPEHQRSGSRLSMKKTGAL) and 1078–1131 (SHVS…CALL). Composition is skewed to basic and acidic residues over residues 1024-1035 (GSEDSHTPEHQR) and 1078-1088 (SHVSEDMDDKS). Residues 1097–1117 (ASGSMGRMSASSSTSSAGGQM) are compositionally biased toward low complexity. Residues 1121-1131 (SKKRSKLCALL) are compositionally biased toward basic residues. Cysteine 1128 is modified (cysteine methyl ester). Cysteine 1128 carries S-farnesyl cysteine lipidation. A propeptide spans 1129–1131 (ALL) (removed in mature form).

Belongs to the cyclic nucleotide phosphodiesterase family. As to quaternary structure, interacts with PrBP. It depends on a divalent metal cation as a cofactor.

Its subcellular location is the cell membrane. The catalysed reaction is 3',5'-cyclic GMP + H2O = GMP + H(+). Functionally, has a role regulating cGMP transport in Malpighian tubule principal cells. This is cGMP-specific 3',5'-cyclic phosphodiesterase from Drosophila erecta (Fruit fly).